A 348-amino-acid polypeptide reads, in one-letter code: tRNA pseudouridine synthase D (348 aa).

Asp-78 acts as the Nucleophile in catalysis. One can recognise a TRUD domain in the interval 150–304 (GLPNFFGPQR…AEGTRRAARL (155 aa)).

It belongs to the pseudouridine synthase TruD family.

It catalyses the reaction uridine(13) in tRNA = pseudouridine(13) in tRNA. Its function is as follows. Responsible for synthesis of pseudouridine from uracil-13 in transfer RNAs. This is tRNA pseudouridine synthase D from Anaeromyxobacter dehalogenans (strain 2CP-1 / ATCC BAA-258).